The chain runs to 344 residues: GTP 3',8-cyclase (344 aa).

The region spanning 19-245 (PFGRAVTYLR…DIPYRTGGPA (227 aa)) is the Radical SAM core domain. A GTP-binding site is contributed by arginine 28. 2 residues coordinate [4Fe-4S] cluster: cysteine 35 and cysteine 39. Tyrosine 41 contributes to the S-adenosyl-L-methionine binding site. Cysteine 42 is a binding site for [4Fe-4S] cluster. Arginine 77 lines the GTP pocket. Glycine 81 serves as a coordination point for S-adenosyl-L-methionine. Threonine 111 contacts GTP. Serine 135 is an S-adenosyl-L-methionine binding site. Position 171 (lysine 171) interacts with GTP. Residue methionine 205 participates in S-adenosyl-L-methionine binding. [4Fe-4S] cluster contacts are provided by cysteine 268 and cysteine 271. GTP is bound at residue 273–275 (RVR). Position 285 (cysteine 285) interacts with [4Fe-4S] cluster.

This sequence belongs to the radical SAM superfamily. MoaA family. As to quaternary structure, monomer and homodimer. It depends on [4Fe-4S] cluster as a cofactor.

It catalyses the reaction GTP + AH2 + S-adenosyl-L-methionine = (8S)-3',8-cyclo-7,8-dihydroguanosine 5'-triphosphate + 5'-deoxyadenosine + L-methionine + A + H(+). Its pathway is cofactor biosynthesis; molybdopterin biosynthesis. Catalyzes the cyclization of GTP to (8S)-3',8-cyclo-7,8-dihydroguanosine 5'-triphosphate. The chain is GTP 3',8-cyclase from Brucella melitensis biotype 2 (strain ATCC 23457).